An 837-amino-acid polypeptide reads, in one-letter code: Striatin-interacting protein 1 (837 aa).

Met-1 carries the N-acetylmethionine modification. Disordered regions lie at residues 1–66 and 333–423; these read MEPA…SESP and AASP…KGLP. The segment covering 18–35 has biased composition (pro residues); sequence PQPPPPPPPATAQPPPGA. The segment covering 47 to 60 has biased composition (basic and acidic residues); the sequence is KAREFNRNQRKDSE. Ser-59, Ser-335, and Ser-339 each carry phosphoserine. The span at 356–377 shows a compositional bias: basic and acidic residues; that stretch reads KALIKQDNLDAFNERDPYKADD. Residues 378–391 show a composition bias toward acidic residues; sequence SREEEEENDDDNSL. Residue Ser-788 is modified to Phosphoserine. The interval 796-837 is required for STRIPAK core complex formation; that stretch reads DNCLQSVLGQRVDLPEDFQMNYDLWLEREVFSKPISWEELLQ.

Belongs to the STRIP family. In terms of assembly, part of the core of STRIPAK complexes composed of PP2A catalytic and scaffolding subunits, the striatins (PP2A regulatory subunits), the striatin-associated proteins MOB4, STRIP1 and STRIP2, PDCD10 and members of the STE20 kinases, such as STK24 and STK26. The STRIPAK complex can be extended by adapter proteins such as SLMAP:SIKE1, CTTNBP2 or CTTNBP2NL. Interacts with CDC42BPB. Interacts with CTTNBP2NL.

The protein resides in the cytoplasm. In terms of biological role, plays a role in the regulation of cell morphology and cytoskeletal organization. Required in the cortical actin filament dynamics and cell shape. Part of the striatin-interacting phosphatase and kinase (STRIPAK) complexes. STRIPAK complexes have critical roles in protein (de)phosphorylation and are regulators of multiple signaling pathways including Hippo, MAPK, nuclear receptor and cytoskeleton remodeling. Different types of STRIPAK complexes are involved in a variety of biological processes such as cell growth, differentiation, apoptosis, metabolism and immune regulation. In Macaca fascicularis (Crab-eating macaque), this protein is Striatin-interacting protein 1 (STRIP1).